We begin with the raw amino-acid sequence, 185 residues long: uncharacterized protein (185 aa).

3 helical membrane passes run Leu-9–Leu-29, Val-72–Val-92, and Phe-111–Leu-131.

Its subcellular location is the cell membrane. This is an uncharacterized protein from Bacillus subtilis (strain 168).